Consider the following 258-residue polypeptide: NAD kinase (258 aa).

Aspartate 45 acts as the Proton acceptor in catalysis. NAD(+)-binding positions include 45–46 (DG), 117–118 (NE), aspartate 147, alanine 155, 158–163 (TAYNYS), and alanine 182.

The protein belongs to the NAD kinase family. Requires a divalent metal cation as cofactor.

The protein resides in the cytoplasm. It catalyses the reaction NAD(+) + ATP = ADP + NADP(+) + H(+). In terms of biological role, involved in the regulation of the intracellular balance of NAD and NADP, and is a key enzyme in the biosynthesis of NADP. Catalyzes specifically the phosphorylation on 2'-hydroxyl of the adenosine moiety of NAD to yield NADP. In Xanthomonas oryzae pv. oryzae (strain MAFF 311018), this protein is NAD kinase.